A 214-amino-acid chain; its full sequence is RNA pyrophosphohydrolase (214 aa).

The Nudix hydrolase domain maps to G6–T149. A Nudix box motif is present at residues G38–G59.

The protein belongs to the Nudix hydrolase family. RppH subfamily. A divalent metal cation is required as a cofactor.

In terms of biological role, accelerates the degradation of transcripts by removing pyrophosphate from the 5'-end of triphosphorylated RNA, leading to a more labile monophosphorylated state that can stimulate subsequent ribonuclease cleavage. This is RNA pyrophosphohydrolase from Burkholderia cenocepacia (strain ATCC BAA-245 / DSM 16553 / LMG 16656 / NCTC 13227 / J2315 / CF5610) (Burkholderia cepacia (strain J2315)).